The primary structure comprises 343 residues: Probable dual-specificity RNA methyltransferase RlmN (343 aa).

Residue Glu91 is the Proton acceptor of the active site. Residues 97-327 (YKHGNSICVS…TTIRREMGSD (231 aa)) enclose the Radical SAM core domain. Cys104 and Cys332 are oxidised to a cystine. The [4Fe-4S] cluster site is built by Cys111, Cys115, and Cys118. S-adenosyl-L-methionine-binding positions include 158–159 (GE), Ser190, 213–215 (SLH), and Asn289. Residue Cys332 is the S-methylcysteine intermediate of the active site.

It belongs to the radical SAM superfamily. RlmN family. [4Fe-4S] cluster is required as a cofactor.

The protein resides in the cytoplasm. The catalysed reaction is adenosine(2503) in 23S rRNA + 2 reduced [2Fe-2S]-[ferredoxin] + 2 S-adenosyl-L-methionine = 2-methyladenosine(2503) in 23S rRNA + 5'-deoxyadenosine + L-methionine + 2 oxidized [2Fe-2S]-[ferredoxin] + S-adenosyl-L-homocysteine. The enzyme catalyses adenosine(37) in tRNA + 2 reduced [2Fe-2S]-[ferredoxin] + 2 S-adenosyl-L-methionine = 2-methyladenosine(37) in tRNA + 5'-deoxyadenosine + L-methionine + 2 oxidized [2Fe-2S]-[ferredoxin] + S-adenosyl-L-homocysteine. Its function is as follows. Specifically methylates position 2 of adenine 2503 in 23S rRNA and position 2 of adenine 37 in tRNAs. In Clostridium novyi (strain NT), this protein is Probable dual-specificity RNA methyltransferase RlmN.